The following is a 194-amino-acid chain: Potassium-transporting ATPase KdpC subunit (194 aa).

A helical membrane pass occupies residues 12 to 34; that stretch reads LFLLLLTGGVYPLLTTALGQWWF.

This sequence belongs to the KdpC family. In terms of assembly, the system is composed of three essential subunits: KdpA, KdpB and KdpC.

The protein localises to the cell inner membrane. Part of the high-affinity ATP-driven potassium transport (or Kdp) system, which catalyzes the hydrolysis of ATP coupled with the electrogenic transport of potassium into the cytoplasm. This subunit acts as a catalytic chaperone that increases the ATP-binding affinity of the ATP-hydrolyzing subunit KdpB by the formation of a transient KdpB/KdpC/ATP ternary complex. This Salmonella heidelberg (strain SL476) protein is Potassium-transporting ATPase KdpC subunit.